A 669-amino-acid polypeptide reads, in one-letter code: Acetyl-coenzyme A synthetase (669 aa).

Residues Arg211–Lys214 and Thr329 contribute to the CoA site. ATP-binding positions include Gly404–Pro406, Asp428–Thr433, Asp519, and Arg534. Residue Ser542 participates in CoA binding. Arg545 is an ATP binding site. Residue Arg602 coordinates CoA.

Belongs to the ATP-dependent AMP-binding enzyme family.

The catalysed reaction is acetate + ATP + CoA = acetyl-CoA + AMP + diphosphate. Its pathway is ketone degradation; acetoin degradation. The protein operates within antibiotic biosynthesis; penicillin biosynthesis. In Penicillium chrysogenum (Penicillium notatum), this protein is Acetyl-coenzyme A synthetase (facA).